We begin with the raw amino-acid sequence, 477 residues long: Cysteine--tRNA ligase (477 aa).

Residue cysteine 29 coordinates Zn(2+). The short motif at 31 to 41 (PTVQASPHIGH) is the 'HIGH' region element. 3 residues coordinate Zn(2+): cysteine 219, histidine 244, and glutamate 248. Positions 275 to 279 (KMSKS) match the 'KMSKS' region motif. Lysine 278 serves as a coordination point for ATP.

Belongs to the class-I aminoacyl-tRNA synthetase family. As to quaternary structure, monomer. It depends on Zn(2+) as a cofactor.

The protein resides in the cytoplasm. It carries out the reaction tRNA(Cys) + L-cysteine + ATP = L-cysteinyl-tRNA(Cys) + AMP + diphosphate. The polypeptide is Cysteine--tRNA ligase (Leifsonia xyli subsp. xyli (strain CTCB07)).